A 394-amino-acid chain; its full sequence is Chorismate synthase (394 aa).

NADP(+) contacts are provided by arginine 40 and arginine 46. FMN-binding positions include 135-137 (RAS), 255-256 (QA), glycine 302, 317-321 (KPISS), and arginine 343.

Belongs to the chorismate synthase family. In terms of assembly, homotetramer. It depends on FMNH2 as a cofactor.

The enzyme catalyses 5-O-(1-carboxyvinyl)-3-phosphoshikimate = chorismate + phosphate. The protein operates within metabolic intermediate biosynthesis; chorismate biosynthesis; chorismate from D-erythrose 4-phosphate and phosphoenolpyruvate: step 7/7. Functionally, catalyzes the anti-1,4-elimination of the C-3 phosphate and the C-6 proR hydrogen from 5-enolpyruvylshikimate-3-phosphate (EPSP) to yield chorismate, which is the branch point compound that serves as the starting substrate for the three terminal pathways of aromatic amino acid biosynthesis. This reaction introduces a second double bond into the aromatic ring system. This Frankia alni (strain DSM 45986 / CECT 9034 / ACN14a) protein is Chorismate synthase.